We begin with the raw amino-acid sequence, 208 residues long: Holliday junction resolvase RecU (208 aa).

Residues T87, D89, E102, and Q121 each coordinate Mg(2+).

This sequence belongs to the RecU family. Requires Mg(2+) as cofactor.

Its subcellular location is the cytoplasm. It carries out the reaction Endonucleolytic cleavage at a junction such as a reciprocal single-stranded crossover between two homologous DNA duplexes (Holliday junction).. Functionally, endonuclease that resolves Holliday junction intermediates in genetic recombination. Cleaves mobile four-strand junctions by introducing symmetrical nicks in paired strands. Promotes annealing of linear ssDNA with homologous dsDNA. Required for DNA repair, homologous recombination and chromosome segregation. The chain is Holliday junction resolvase RecU from Staphylococcus aureus (strain MRSA252).